We begin with the raw amino-acid sequence, 106 residues long: Small ribosomal subunit protein uS17 (106 aa).

Belongs to the universal ribosomal protein uS17 family. In terms of assembly, part of the 30S ribosomal subunit.

Its function is as follows. One of the primary rRNA binding proteins, it binds specifically to the 5'-end of 16S ribosomal RNA. The sequence is that of Small ribosomal subunit protein uS17 from Methanosphaera stadtmanae (strain ATCC 43021 / DSM 3091 / JCM 11832 / MCB-3).